We begin with the raw amino-acid sequence, 1375 residues long: Mediator of RNA polymerase II transcription subunit 13 (1375 aa).

The disordered stretch occupies residues 1 to 51 (MKASEMARPPMRPGNPHAFASPATTPSRTASPNNAQGANVRTTQGGNQAGA). Residues 22-51 (PATTPSRTASPNNAQGANVRTTQGGNQAGA) are compositionally biased toward polar residues. 2 coiled-coil regions span residues 182–216 (ADDS…WLSR) and 297–324 (QLER…KDEA). Positions 313 to 324 (AEEDAMRRKDEA) are enriched in basic and acidic residues. Disordered stretches follow at residues 313–333 (AEED…SSPF), 350–370 (YPTP…DTPS), 397–417 (YTTT…APLE), 537–581 (ATSP…PASL), 660–689 (RAVS…VDTH), 841–862 (QAKG…IPSN), and 1233–1285 (TPTT…AADP). A compositionally biased stretch (polar residues) spans 397–411 (YTTTDNQQHASTSPT). Acidic residues predominate over residues 666–685 (SASDSESETSDMSEGSPEDP). The segment covering 1233–1259 (TPTTPAPSNSSAQANTNTPGSTPQTGV) has biased composition (polar residues).

This sequence belongs to the Mediator complex subunit 13 family. As to quaternary structure, component of the SRB8-11 complex, which itself associates with the Mediator complex.

The protein resides in the nucleus. Functionally, component of the SRB8-11 complex. The SRB8-11 complex is a regulatory module of the Mediator complex which is itself involved in regulation of basal and activated RNA polymerase II-dependent transcription. The SRB8-11 complex may be involved in the transcriptional repression of a subset of genes regulated by Mediator. It may inhibit the association of the Mediator complex with RNA polymerase II to form the holoenzyme complex. The chain is Mediator of RNA polymerase II transcription subunit 13 (SSN2) from Phaeosphaeria nodorum (strain SN15 / ATCC MYA-4574 / FGSC 10173) (Glume blotch fungus).